The following is a 147-amino-acid chain: Phosphoribosyl-AMP cyclohydrolase (147 aa).

A Mg(2+)-binding site is contributed by Asp-97. A Zn(2+)-binding site is contributed by Cys-98. Positions 99 and 101 each coordinate Mg(2+). The Zn(2+) site is built by Cys-114 and Cys-121.

Belongs to the PRA-CH family. Homodimer. The cofactor is Mg(2+). Requires Zn(2+) as cofactor.

Its subcellular location is the cytoplasm. The catalysed reaction is 1-(5-phospho-beta-D-ribosyl)-5'-AMP + H2O = 1-(5-phospho-beta-D-ribosyl)-5-[(5-phospho-beta-D-ribosylamino)methylideneamino]imidazole-4-carboxamide. It participates in amino-acid biosynthesis; L-histidine biosynthesis; L-histidine from 5-phospho-alpha-D-ribose 1-diphosphate: step 3/9. Its function is as follows. Catalyzes the hydrolysis of the adenine ring of phosphoribosyl-AMP. This Hydrogenovibrio crunogenus (strain DSM 25203 / XCL-2) (Thiomicrospira crunogena) protein is Phosphoribosyl-AMP cyclohydrolase.